A 206-amino-acid chain; its full sequence is Ion-translocating oxidoreductase complex subunit G (206 aa).

Residues 9–29 (GITLALFAAGSTGLTAVINQM) form a helical membrane-spanning segment. Thr-174 carries the FMN phosphoryl threonine modification.

It belongs to the RnfG family. As to quaternary structure, the complex is composed of six subunits: RsxA, RsxB, RsxC, RsxD, RsxE and RsxG. The cofactor is FMN.

It localises to the cell inner membrane. Part of a membrane-bound complex that couples electron transfer with translocation of ions across the membrane. Required to maintain the reduced state of SoxR. In Salmonella typhimurium (strain LT2 / SGSC1412 / ATCC 700720), this protein is Ion-translocating oxidoreductase complex subunit G.